The sequence spans 144 residues: Small ribosomal subunit protein bS6 (144 aa).

The interval 95 to 144 (ELEEGPSAMMQSKSRDDRPRRGEGDDRPRRDDREDRPRRDREPRRMEGGE) is disordered. Positions 107 to 144 (KSRDDRPRRGEGDDRPRRDDREDRPRRDREPRRMEGGE) are enriched in basic and acidic residues.

It belongs to the bacterial ribosomal protein bS6 family.

Functionally, binds together with bS18 to 16S ribosomal RNA. This chain is Small ribosomal subunit protein bS6, found in Paramagnetospirillum magneticum (strain ATCC 700264 / AMB-1) (Magnetospirillum magneticum).